A 574-amino-acid chain; its full sequence is Cholinesterase (574 aa).

N-linked (GlcNAc...) asparagine glycosylation is present at Asn-57. A disulfide bridge connects residues Cys-65 and Cys-92. A glycan (N-linked (GlcNAc...) asparagine) is linked at Asn-106. 116 to 117 (GG) is a substrate binding site. Ser-198 serves as the catalytic Acyl-ester intermediate. At Ser-198 the chain carries Phosphoserine. Residues Asn-241 and Asn-256 are each glycosylated (N-linked (GlcNAc...) asparagine). Residues Cys-252 and Cys-263 are joined by a disulfide bond. Catalysis depends on Glu-325, which acts as the Charge relay system. An N-linked (GlcNAc...) asparagine glycan is attached at Asn-341. Cysteines 400 and 519 form a disulfide. Catalysis depends on His-438, which acts as the Charge relay system. Residues Asn-455, Asn-481, and Asn-486 are each glycosylated (N-linked (GlcNAc...) asparagine).

Belongs to the type-B carboxylesterase/lipase family. In terms of assembly, homotetramer; disulfide-linked. Dimer of dimers. As to expression, detected in blood plasma (at protein level). Present in most cells except erythrocytes.

Its subcellular location is the secreted. It catalyses the reaction an acylcholine + H2O = a carboxylate + choline + H(+). Functionally, esterase with broad substrate specificity. Contributes to the inactivation of the neurotransmitter acetylcholine. Can degrade neurotoxic organophosphate esters. This is Cholinesterase (BCHE) from Equus caballus (Horse).